The primary structure comprises 443 residues: MSVNADSQHSNNSSHQASEKAFDRARSLIPGGVNSPVRAFGSVGGTPPFITSAQGSTLHDVDGNSYVDLFCSWGPMIHGHAHPQIVEAVREAAGHGLSFGAPTTMEVDLVEEIDRRTSVEKARLVNSGTEATMSAIRLARGYTGRDKILKFEGCYHGHVDSLLVAAGSGVATFGLPDSPGITKAAAGDTVVVPYRDVQAVEDAFASHEGEIAAIIVEGAAGNMGTVNPRGFNAELQRIAHENGALLIVDEVMTGFRVSESGWYGKDGVAGDLTTFGKVVSGGLPAAAFGGKAEIMDHLAPVGPVYQAGTLSGNPVAVASGLASLKLADAAAYQTLDANADALAGILSDALTKASVAHHIQRAGSMLSVRFAEGEGANFADMKAADTFRYPAFFHAFLDHGVFAPPSVFETWFVSTALTGADFEKIAAAATPAAEAAAAATPSA.

Positions 1-16 are enriched in low complexity; the sequence is MSVNADSQHSNNSSHQ. Residues 1-22 form a disordered region; the sequence is MSVNADSQHSNNSSHQASEKAF. K277 bears the N6-(pyridoxal phosphate)lysine mark.

Belongs to the class-III pyridoxal-phosphate-dependent aminotransferase family. HemL subfamily. As to quaternary structure, homodimer. It depends on pyridoxal 5'-phosphate as a cofactor.

It is found in the cytoplasm. It catalyses the reaction (S)-4-amino-5-oxopentanoate = 5-aminolevulinate. Its pathway is porphyrin-containing compound metabolism; protoporphyrin-IX biosynthesis; 5-aminolevulinate from L-glutamyl-tRNA(Glu): step 2/2. This Corynebacterium jeikeium (strain K411) protein is Glutamate-1-semialdehyde 2,1-aminomutase.